A 67-amino-acid polypeptide reads, in one-letter code: MPKLKTKSGVKKRFKLTATGKVKHGVAGKRHRLISHNSKYIRTNRGTTVLAEADTARVKLWAPYGLN.

It belongs to the bacterial ribosomal protein bL35 family.

In Rhizorhabdus wittichii (strain DSM 6014 / CCUG 31198 / JCM 15750 / NBRC 105917 / EY 4224 / RW1) (Sphingomonas wittichii), this protein is Large ribosomal subunit protein bL35.